The primary structure comprises 312 residues: Acetyl-coenzyme A carboxylase carboxyl transferase subunit beta (312 aa).

In terms of domain architecture, CoA carboxyltransferase N-terminal spans 24–293; it reads LWIKCPDSGQ…VEHAKPAPQL (270 aa). A disordered region spans residues 286–312; sequence HAKPAPQLPPPAKPAETAEAPAVATSA. Residues 299-312 are compositionally biased toward low complexity; the sequence is PAETAEAPAVATSA.

The protein belongs to the AccD/PCCB family. In terms of assembly, acetyl-CoA carboxylase is a heterohexamer composed of biotin carboxyl carrier protein (AccB), biotin carboxylase (AccC) and two subunits each of ACCase subunit alpha (AccA) and ACCase subunit beta (AccD).

It localises to the cytoplasm. The catalysed reaction is N(6)-carboxybiotinyl-L-lysyl-[protein] + acetyl-CoA = N(6)-biotinyl-L-lysyl-[protein] + malonyl-CoA. It functions in the pathway lipid metabolism; malonyl-CoA biosynthesis; malonyl-CoA from acetyl-CoA: step 1/1. Functionally, component of the acetyl coenzyme A carboxylase (ACC) complex. Biotin carboxylase (BC) catalyzes the carboxylation of biotin on its carrier protein (BCCP) and then the CO(2) group is transferred by the transcarboxylase to acetyl-CoA to form malonyl-CoA. The protein is Acetyl-coenzyme A carboxylase carboxyl transferase subunit beta of Bradyrhizobium sp. (strain ORS 278).